The primary structure comprises 94 residues: uncharacterized protein (94 aa).

Positions 1 to 25 (MRAAIAVLFIALVGLATYHLVMSQA) are cleaved as a signal peptide.

This is an uncharacterized protein from Archaeoglobus fulgidus (strain ATCC 49558 / DSM 4304 / JCM 9628 / NBRC 100126 / VC-16).